Reading from the N-terminus, the 590-residue chain is Nuclear receptor subfamily 2 group C member 1 (590 aa).

A required for interaction with KAT2B region spans residues 1 to 166 (MATIEEIAHQ…RLQRCIAFGM (166 aa)). The segment at residues 98-173 (FDLCVVCGDK…FGMKQDSVQC (76 aa)) is a DNA-binding region (nuclear receptor). 2 NR C4-type zinc fingers span residues 101–121 (CVVC…CEGC) and 137–156 (CRGS…CQYC). A phosphoserine mark is found at S185 and S203. T208 is subject to Phosphothreonine. Residue T210 is modified to Phosphothreonine; by MAPK1. Residue K238 forms a Glycyl lysine isopeptide (Lys-Gly) (interchain with G-Cter in SUMO); alternate linkage. K238 participates in a covalent cross-link: Glycyl lysine isopeptide (Lys-Gly) (interchain with G-Cter in SUMO2); alternate. Residues 333–577 (EGMEGSPHLI…SVIPHILKME (245 aa)) form the NR LBD domain. Phosphoserine; by PKC occurs at positions 461 and 568. A required for interaction with NRIP1 region spans residues 571–590 (PHILKMEPADYNSQIIGHSL). K575 participates in a covalent cross-link: Glycyl lysine isopeptide (Lys-Gly) (interchain with G-Cter in SUMO2).

Belongs to the nuclear hormone receptor family. NR2 subfamily. As to quaternary structure, homodimer. Heterodimer; with NR2C2 which is required for chromatin remodeling and for binding to promoter regions such as globin DR1 repeats. Interacts with ESR1; the interaction prevents homodimerization of ESR1 and suppresses its transcriptional activity and cell growth. Interacts with NRIP1 (via its LXXLL motifs); the interaction provides corepressor activity. Interacts with HDAC3 (via the DNA-binding domain); the interaction recruits phosphorylated NR2C1 to PML bodies for sumoylation. Interacts with HDAC4 (via the DNA-binding domain). Interacts with PIAS1; the interaction is required for sumoylation of NR2C1. Interacts with UBE2I; the interaction is required for sumoylation of NR2C1. Interacts with KAT2B; the interaction acts as a corepressor of gene expression. Sumoylation requires both PIAS1 and UBE2I. Sumoylation appears to dissociate NR2C1 from the PML nuclear bodies. Enhances the interaction with NRIP1 but inhibits interaction with KAT2B. In proliferating cells, stimulation by all-trans retinoic acid, activation of MAPK1-mediated phosphorylation and recruitment to PML bodies with subsequent sumoylation, suppresses OCT4 expression. In terms of processing, phosphorylated on several serine and threonine residues. Phosphorylation on Thr-210, stimulated by all-trans retinoic acid (atRA) mediates PML location and sumoylation in proliferating cells which then modulates its association with effector molecules, KAT2B and NRIP1. Phosphorylation on Ser-568 by PKC is important for protein stability and function as activator of RARB. As to expression, isoform 1 is highly expressed in the adlumenal compartment of the seminiferous tubule of adult testes (at protein level) and in the eyes of newborn animals. Weakly expressed in other adult organs including the seminal vesicle, prostate, ovary, adrenal gland, heart, thymus, placenta and brain. Expressed during embryonic stages in developing eyes, brain and cartilage primordia (at protein level). Also expressed in the developing spinal motor neurons and in the sympathetic-, parasympathetic- and sensory ganglia of the embryonic PNS. Expressed in the developing neural epithelia of the inner ear, nasal cavity, tongue and retina. At day 16.5, expressed in various tissues including kidney and intestine. In contrast, isoform 2 is widely expressed at a low level throughout the adult testis.

It localises to the nucleus. The protein localises to the PML body. Functionally, orphan nuclear receptor. Binds the IR7 element in the promoter of its own gene in an autoregulatory negative feedback mechanism. Primarily repressor of a broad range of genes including ESR1 and RARB. Together with NR2C2, forms the core of the DRED (direct repeat erythroid-definitive) complex that represses embryonic and fetal globin transcription. Binds to hormone response elements (HREs) consisting of two 5'-AGGTCA-3' half site direct repeat consensus sequences. Also activator of OCT4 gene expression. Plays a fundamental role in early embryogenesis and regulates embryonic stem cell proliferation and differentiation. Mediator of retinoic acid-regulated preadipocyte proliferation. The sequence is that of Nuclear receptor subfamily 2 group C member 1 from Mus musculus (Mouse).